The primary structure comprises 804 residues: MYVLNRKGEEEDISFDQILKRIQRLSYGLHKLGEYPACVTQGVINGMYSSIKTCELDELAAQTCAYMATTHPDFSILAARITTDNLHKNTSDDVAEVAEALYTYKDGRGRPASLISKEVYDFILLHKVRLNKEIDYTTHFNYDYFGFKTLERSYLLRINNKIIERPQHLLMRVSIGIHIDDIDKALETYHLMSQKYFTHATPTLFNSGTPRPQMSSCFLLSMKADSIEGIFETLKQCALISKTAGGIGVAVQDIRGQNSYIRGTNGISNGLVPMLRVFNDTARYVDQGGGKRKGSYAVYIEPWHSDIFEFLDLRKNHGKEELRARDLFYAVWVPDLFMKRVKENKNWTLMCPNECPGLSETWGEEFEKLYTKYEEENMGKKTVLAQDLWFAILQSQIETGVPIYLYKDSCNAKPIKNLGTIKCSNLCCEIIEYTSPDEVAVCNLASIALCKFVDLEKKEFNFKKLYEITKIITRNLDKIIERNYYPVKEAKTSNTRHRPIGIGVQGLADTFMLLRYLYESDAAKELNKRIYETMYYAALEMSVDWLQSGPYESYQGSPGSQGILQFDMWNAKVDNKYWDWDELKLKIAKTGLRNLLLLAPMPTASTSQILGNNESFEPYTSNIYYRRVLSGEFFVVNPHLLKDLFDRGLWDEDMKQQLIAHNGSIQYISEIPDDLKELYKTVWEIKQKNIIDMAADRGYFIDQSQSLNIYIQKPTFAKLSSMHFYGWEKGLKTGAYYLRTQAATDAIKFTVDTHVAKNAVKLKNADGVQITREVSRETIQLNQRYSKCVSFKSNNDEQCLMCSG.

One can recognise an ATP-cone domain in the interval 1-92; sequence MYVLNRKGEE…TDNLHKNTSD (92 aa). ATP contacts are provided by residues 5 to 6, 11 to 17, threonine 53, and aspartate 57; these read NR and EDISFDQ. Serine 216 contacts GDP. A disulfide bond links cysteine 217 and cysteine 442. Residues 225–227, lysine 242, arginine 255, and 262–263 each bind dTTP; these read DSI and RG. Position 425 (asparagine 425) interacts with GDP. Residue asparagine 425 is the Proton acceptor of the active site. The Cysteine radical intermediate role is filled by cysteine 427. Residues glutamate 429 and 603–606 each bind GDP; that span reads TAST. Glutamate 429 serves as the catalytic Proton acceptor.

This sequence belongs to the ribonucleoside diphosphate reductase large chain family. As to quaternary structure, heterodimer of a large and a small subunit.

The enzyme catalyses a 2'-deoxyribonucleoside 5'-diphosphate + [thioredoxin]-disulfide + H2O = a ribonucleoside 5'-diphosphate + [thioredoxin]-dithiol. Its activity is regulated as follows. Under complex allosteric control mediated by deoxynucleoside triphosphates and ATP binding to separate specificity and activation sites on the large subunit. The type of nucleotide bound at the specificity site determines substrate preference. It seems probable that ATP makes the enzyme reduce CDP and UDP, dGTP favors ADP reduction and dTTP favors GDP reduction. Stimulated by ATP and inhibited by dATP binding to the activity site. Its function is as follows. Provides the precursors necessary for DNA synthesis. Catalyzes the biosynthesis of deoxyribonucleotides from the corresponding ribonucleotides. The sequence is that of Ribonucleoside-diphosphate reductase large subunit (RNR1) from Plasmodium falciparum (isolate FCR-3 / Gambia).